Reading from the N-terminus, the 296-residue chain is Morphine 6-dehydrogenase (296 aa).

13–22 (GVKMPALGLG) is an NADP(+) binding site. Catalysis depends on tyrosine 52, which acts as the Proton donor. Histidine 110 contacts substrate.

Belongs to the aldo/keto reductase family. In terms of assembly, monomer.

The enzyme catalyses morphine + NAD(+) = morphinone + NADH + H(+). The catalysed reaction is morphine + NADP(+) = morphinone + NADPH + H(+). Its pathway is alkaloid degradation; codeine degradation. It functions in the pathway alkaloid degradation; morphine degradation. Oxidizes only the C-6 hydroxy group of morphine and codeine. The chain is Morphine 6-dehydrogenase (morA) from Pseudomonas putida (Arthrobacter siderocapsulatus).